We begin with the raw amino-acid sequence, 87 residues long: Small ribosomal subunit protein bS20 (87 aa).

Belongs to the bacterial ribosomal protein bS20 family.

Functionally, binds directly to 16S ribosomal RNA. The chain is Small ribosomal subunit protein bS20 from Parvibaculum lavamentivorans (strain DS-1 / DSM 13023 / NCIMB 13966).